The following is a 225-amino-acid chain: uncharacterized protein (225 aa).

The signal sequence occupies residues 1–21 (MSLHYYLFIFWILAFVQFSHA).

Prismatic layer of shell (at protein level).

The protein localises to the secreted. This is an uncharacterized protein from Margaritifera margaritifera (Freshwater pearl mussel).